The sequence spans 315 residues: MKIIIFRVLTFFFVIFSVNVVAKEFTLDFSTAKTYVDSLNVIRSAIGTPLQTISSGGTSLLMIDSGSGDNLFAVDVRGIDPEEGRFNNLRLIVERNNLYVTGFVNRTNNVFYRFADFSHVTFPGTTAVTLSGDSSYTTLQRVAGISRTGMQINRHSLTTSYLDLMSHSGTSLTQSVARAMLRFVTVTAEALRFRQIQRGFRTTLDDLSGRSYVMTAEDVDLTLNWGRLSSVLPDYHGQDSVRVGRISFGSINAILGSVALILNCHHHASRVARMASDEFPSMCPADGRVRGITHNKILWDSSTLGAILMRRTISS.

A signal peptide spans 1 to 22 (MKIIIFRVLTFFFVIFSVNVVA). An A1 region spans residues 23–273 (KEFTLDFSTA…CHHHASRVAR (251 aa)). Residue Glu189 is part of the active site. Cys264 and Cys283 are joined by a disulfide. The segment at 274-315 (MASDEFPSMCPADGRVRGITHNKILWDSSTLGAILMRRTISS) is A2.

This sequence belongs to the ribosome-inactivating protein family. In terms of assembly, shiga-like toxin contains a single subunit A and five copies of subunit B.

Its subcellular location is the secreted. The enzyme catalyses Endohydrolysis of the N-glycosidic bond at one specific adenosine on the 28S rRNA.. Its function is as follows. The A subunit is responsible for inhibiting protein synthesis through the catalytic inactivation of 60S ribosomal subunits. After endocytosis, the A subunit is cleaved by furin in two fragments, A1 and A2: A1 is the catalytically active fragment, and A2 is essential for holotoxin assembly with the B subunits. The polypeptide is Shiga-like toxin 1 subunit A (stxA) (Escherichia coli (Bacteriophage H19B)).